Reading from the N-terminus, the 205-residue chain is Max-like protein homolog 2 (205 aa).

2 stretches are compositionally biased toward low complexity: residues 1–12 and 26–40; these read MSRSRSAAASSS and SASS…ATNS. The interval 1–58 is disordered; the sequence is MSRSRSAAASSSQKPDDMDLMSPDGSASSPSAPNTPATNSGGFSSDRKKATHLRCERQ. Basic and acidic residues predominate over residues 45-58; the sequence is SDRKKATHLRCERQ. Positions 47 to 60 are basic motif; sequence RKKATHLRCERQRR. The 55-residue stretch at 47–101 folds into the bHLH domain; that stretch reads RKKATHLRCERQRREAINSGYSDLKDLIPQTTTSLGCKTTNAAILFRACDFMSQL. Positions 61-101 are helix-loop-helix motif; that stretch reads EAINSGYSDLKDLIPQTTTSLGCKTTNAAILFRACDFMSQL. The stretch at 98–132 forms a coiled coil; it reads MSQLKTDISDADKQLAQLNAQAAALEMIASEYEQM.

Widely expressed.

The protein localises to the nucleus. Its subcellular location is the cytoplasm. It localises to the mitochondrion. Functionally, transcription factor. Binds to the E box motif 5'-CACGTG-3', probably in a heterodimeric complex with mml-1. Involved in modulating longevity in response to TOR signaling, dietary restriction, the decline in protein homeostasis associated with normal aging, germline signaling and the insulin-like signaling pathway. Plays a role in autophagy. Involved in regulating migration of the ray 1 precursor cells in the male tail, acting in concert with Wnt and semaphorin signaling pathways. Regulates transcription of genes encoding extracellular matrix (ECM) components which may contribute to the substratum required for migration of the neighboring ray 1 precursor cells. Required for resistance to oxidative stress. Involved in promoting infection by the microsporidian pathogen N.parisii, probably acting independently of its canonical partner, mml-1. The sequence is that of Max-like protein homolog 2 from Caenorhabditis elegans.